The primary structure comprises 495 residues: Bifunctional protein GlmU (495 aa).

Residues 1–241 (MTFPGDTAVL…SALVAGVNNR (241 aa)) are pyrophosphorylase. UDP-N-acetyl-alpha-D-glucosamine is bound by residues 12 to 15 (LAAG), Lys26, Gln83, 88 to 89 (GT), 112 to 114 (SGD), Gly151, Glu166, Asn181, and Asn239. Mg(2+) is bound at residue Asp114. Asn239 lines the Mg(2+) pocket. The segment at 242–262 (VQLAQLASELNRRVVAAHQLA) is linker. Residues 263-495 (GVTVVDPATT…TQPPDADQTP (233 aa)) form an N-acetyltransferase region. The UDP-N-acetyl-alpha-D-glucosamine site is built by Arg344 and Lys362. Residue His374 is the Proton acceptor of the active site. Residues Tyr377 and Asn388 each coordinate UDP-N-acetyl-alpha-D-glucosamine. Acetyl-CoA is bound by residues Ala391, 397-398 (NY), Ser416, and Ala434. Residues 457-495 (IENWVQRKRPGSPAAQASKRASEMACQQPTQPPDADQTP) form a disordered region. Positions 483–495 (QQPTQPPDADQTP) are enriched in low complexity.

It in the N-terminal section; belongs to the N-acetylglucosamine-1-phosphate uridyltransferase family. In the C-terminal section; belongs to the transferase hexapeptide repeat family. Homotrimer. It depends on Mg(2+) as a cofactor.

It is found in the cytoplasm. The enzyme catalyses alpha-D-glucosamine 1-phosphate + acetyl-CoA = N-acetyl-alpha-D-glucosamine 1-phosphate + CoA + H(+). It carries out the reaction N-acetyl-alpha-D-glucosamine 1-phosphate + UTP + H(+) = UDP-N-acetyl-alpha-D-glucosamine + diphosphate. The protein operates within nucleotide-sugar biosynthesis; UDP-N-acetyl-alpha-D-glucosamine biosynthesis; N-acetyl-alpha-D-glucosamine 1-phosphate from alpha-D-glucosamine 6-phosphate (route II): step 2/2. It participates in nucleotide-sugar biosynthesis; UDP-N-acetyl-alpha-D-glucosamine biosynthesis; UDP-N-acetyl-alpha-D-glucosamine from N-acetyl-alpha-D-glucosamine 1-phosphate: step 1/1. Its pathway is bacterial outer membrane biogenesis; LPS lipid A biosynthesis. Its function is as follows. Catalyzes the last two sequential reactions in the de novo biosynthetic pathway for UDP-N-acetylglucosamine (UDP-GlcNAc). The C-terminal domain catalyzes the transfer of acetyl group from acetyl coenzyme A to glucosamine-1-phosphate (GlcN-1-P) to produce N-acetylglucosamine-1-phosphate (GlcNAc-1-P), which is converted into UDP-GlcNAc by the transfer of uridine 5-monophosphate (from uridine 5-triphosphate), a reaction catalyzed by the N-terminal domain. The polypeptide is Bifunctional protein GlmU (Mycobacterium bovis (strain ATCC BAA-935 / AF2122/97)).